We begin with the raw amino-acid sequence, 306 residues long: tRNA pseudouridine synthase B (306 aa).

The Nucleophile role is filled by aspartate 47.

Belongs to the pseudouridine synthase TruB family. Type 1 subfamily.

The catalysed reaction is uridine(55) in tRNA = pseudouridine(55) in tRNA. In terms of biological role, responsible for synthesis of pseudouridine from uracil-55 in the psi GC loop of transfer RNAs. This chain is tRNA pseudouridine synthase B, found in Neisseria gonorrhoeae (strain NCCP11945).